A 79-amino-acid chain; its full sequence is UPF0180 protein BcerKBAB4_1316 (79 aa).

The protein belongs to the UPF0180 family.

The protein is UPF0180 protein BcerKBAB4_1316 of Bacillus mycoides (strain KBAB4) (Bacillus weihenstephanensis).